The sequence spans 91 residues: Small membrane A-kinase anchor protein (91 aa).

Gly-2 is lipidated: N-myristoyl glycine.

It belongs to the small membrane AKAP family. Post-translationally, may be palmitoylated at Cys-3.

It is found in the cell membrane. Binds to type I regulatory subunits of protein kinase A and may anchor/target them to the plasma membrane. The polypeptide is Small membrane A-kinase anchor protein (Xenopus laevis (African clawed frog)).